The following is a 679-amino-acid chain: Methyl-accepting chemotaxis protein McpB (679 aa).

Divergent domain HAMP regions lie at residues Ala-8 to Arg-56, Gln-63 to Ile-112, and His-111 to Arg-156. One can recognise a PAS domain in the interval Tyr-171 to Ile-213. His-234 serves as a coordination point for heme. Residues Asp-285–Thr-287 carry the DxT. Important for signal propagation motif. The segment at Glu-289 to Val-332 is divergent domain HAMP 4. Residues Asp-333–Gly-385 form the HAMP 5 domain. A Methyl-accepting transducer domain is found at Ala-390–Gln-619. Disordered stretches follow at residues Asn-405–Ser-425 and Ala-644–Phe-679. The segment covering Arg-411 to Ser-425 has biased composition (polar residues). Positions Ala-670–Phe-679 are enriched in basic and acidic residues. Residues Gly-675–Phe-679 carry the GWEEF pentapeptide. Important for methylation by CheR2 motif.

Belongs to the methyl-accepting chemotaxis (MCP) protein family. In terms of assembly, homodimer. The PAS domains form dimers in the presence and absence of oxygen. Interacts with the methyltransferase CheR2 via the C-terminal McpB pentapeptide GWEEF. Interacts with the methylesterase/gutaminase CheB2, which also binds to the GWEEF pentapeptide. Post-translationally, methylated by CheR2, but not by CheR1, CheR3 or WspC. Demethylated by CheB2. In vitro, can be methylated by E.coli CheR.

It is found in the cytoplasm. Chemoreceptor that plays a critical role in the virulence and pathogenesis of P.aeruginosa in a variety of hosts. Probably acts through oxygen sensing. Uses a heme-based sensor. Could be involved in chemotaxis. When expressed in E.coli, is able to sense and mediate repellent responses to oxygen, carbon monoxide and nitric oxide. This chain is Methyl-accepting chemotaxis protein McpB, found in Pseudomonas aeruginosa (strain ATCC 15692 / DSM 22644 / CIP 104116 / JCM 14847 / LMG 12228 / 1C / PRS 101 / PAO1).